The sequence spans 320 residues: TATA box-binding protein-like 2 (320 aa).

This sequence belongs to the TBP family. As to expression, expression is restricted to the gonads, and is higher in the ovary than the testis.

Its subcellular location is the nucleus. TATA box-binding transcription factor. Members of the TBP family are differentially required to regulate transcription and development during early embryogenesis. Required for gastrulation. Regulates a large subset of genes that are ventrally expressed. Binds to a subset of promoters. This chain is TATA box-binding protein-like 2, found in Xenopus laevis (African clawed frog).